The primary structure comprises 249 residues: 2,3-bisphosphoglycerate-dependent phosphoglycerate mutase (249 aa).

Substrate contacts are provided by residues 8–15 (RHGESTWN), 21–22 (TG), arginine 60, 87–90 (ERHY), lysine 98, 114–115 (RR), and 183–184 (GN). Histidine 9 (tele-phosphohistidine intermediate) is an active-site residue. Catalysis depends on glutamate 87, which acts as the Proton donor/acceptor.

Belongs to the phosphoglycerate mutase family. BPG-dependent PGAM subfamily. In terms of assembly, homodimer.

The enzyme catalyses (2R)-2-phosphoglycerate = (2R)-3-phosphoglycerate. Its pathway is carbohydrate degradation; glycolysis; pyruvate from D-glyceraldehyde 3-phosphate: step 3/5. Functionally, catalyzes the interconversion of 2-phosphoglycerate and 3-phosphoglycerate. This Burkholderia mallei (strain NCTC 10247) protein is 2,3-bisphosphoglycerate-dependent phosphoglycerate mutase.